The chain runs to 551 residues: MDRRRFIKGSMAMAAVCGTSGIASLFSQAAFAADPDIADGQTQRFDFSILQSMAHDLAQTAWRGAPRPLPDTLATMTPQAYNSIQYDAEKSLWHNVENRQLDAQFFHMGMGFRRRVRMFSVDPATHLAREIHFRPELFKYNDAGVDTKQLEGQSDLGFAGFRVFKAPELARRDVVSFLGASYFRAVDDTYQYGLSARGLAIDTYTDSKEEFPDFTAFWFDTVKPGATTFTVYALLDSASITGAYKFTIHCEKSQVIMDVENHLYARKDIKQLGIAPMTSMFSCGTNERRMCDAIHPQIHDSDRLSMWRGNGEWICRPLNNPQKLQFNAYTDNNPKGFGLLQLDRDFSHYQDIMGWYNKRPSLWVEPRNKWGKGTIGLMEIPTTGETLDNIVCFWQPEKAVKAGDEFAFQYRLYWSAQPPVHCPLARVMATRTGMGGFPEGWAPGEHYPEKWARRFAVDFVGGDLKAAAPKGIEPVITLSSGEAKQIEILYIEPIDGYRIQFDWYPTSDSTDPVDMRMYLRCQGDAISETWLYQYFPPAPDKRQYVDDRVMS.

A signal peptide (tat-type signal) is located at residues 1-32 (MDRRRFIKGSMAMAAVCGTSGIASLFSQAAFA).

It belongs to the OpgD/OpgG family. Predicted to be exported by the Tat system. The position of the signal peptide cleavage has not been experimentally proven.

The protein resides in the periplasm. Its pathway is glycan metabolism; osmoregulated periplasmic glucan (OPG) biosynthesis. Its function is as follows. Probably involved in the control of the structural glucose backbone of osmoregulated periplasmic glucans (OPGs). The protein is Glucans biosynthesis protein D of Shigella dysenteriae serotype 1 (strain Sd197).